Reading from the N-terminus, the 260-residue chain is MSIHLVIIDALNLIRRVHSAQPDPTDIARTITTTGRTLTRILSEAQPTHIIAVFDHHEQDRGWRAEILPDYKQNRKPMPEPLIKGLDALQQAWWEQGIDSLLSEGDEADDLVATLATKVASHGEKVTIVSTDKGYCQLLSPTLQIRDYFQHRWLDEPFIEKEFGVKPSQLADYWGLTGISSSQVPGVPGVGPKAAKEILTQFEDIEAAYASEELVPKYRKKLDEHIESARLCKRVAALKCDIDLGFNLQDIRFTGPNKAQ.

D109 contacts Mg(2+). One can recognise a 5'-3' exonuclease domain in the interval 165–259 (VKPSQLADYW…DIRFTGPNKA (95 aa)). The K(+) site is built by L176, P185, V187, and V190. The segment at 189–194 (GVGPKA) is interaction with DNA.

This sequence belongs to the Xni family. Mg(2+) is required as a cofactor. K(+) serves as cofactor.

Its function is as follows. Has flap endonuclease activity. During DNA replication, flap endonucleases cleave the 5'-overhanging flap structure that is generated by displacement synthesis when DNA polymerase encounters the 5'-end of a downstream Okazaki fragment. The chain is Flap endonuclease Xni from Vibrio campbellii (strain ATCC BAA-1116).